A 122-amino-acid polypeptide reads, in one-letter code: UPF0102 protein Ping_1176 (122 aa).

It belongs to the UPF0102 family.

This chain is UPF0102 protein Ping_1176, found in Psychromonas ingrahamii (strain DSM 17664 / CCUG 51855 / 37).